The chain runs to 450 residues: MGKYFGTDGVRGEANVELTPELAFKLGRFGGYVLSQHETERPRVFVARDTRISGEMLEAALIAGLLSVGIEVYKLGVLATPGVSYLVRTEKASAGVMISASHNPALDNGIKFFGSDGFKLADEQELEIEALLDAKEDLLPRPSAEGLGALVDYPEGLRKYERFLVTTGADLDGLKIALDTANGAASVSARNVFLDLNADITVIGENPNGLNINDGIGSTHPEKLQDLVTETASDIGLAFDGDSDRLIAVDENGAIVDGDKIMFIIGKYLSEKGLLAKNTIVTTVMSNLGFHKALDSCGIHKKVTAVGDRYVVEEMRQFGYNLGGEQSGHVIIMDYNTTGDGQLTAVQLTKIMKETGKTLSELASEVTIYPQKLVNIRVDNSMKERAMEVPAIAEVIAQMEGEMAGNGRILVRPSGTEPLLRVMAEAPSNEEVDYYVDTIAAVVRAEIGLD.

Catalysis depends on Ser-101, which acts as the Phosphoserine intermediate. Mg(2+) is bound by residues Ser-101, Asp-240, Asp-242, and Asp-244. Ser-101 carries the post-translational modification Phosphoserine.

The protein belongs to the phosphohexose mutase family. Mg(2+) serves as cofactor. Activated by phosphorylation.

It carries out the reaction alpha-D-glucosamine 1-phosphate = D-glucosamine 6-phosphate. Functionally, catalyzes the conversion of glucosamine-6-phosphate to glucosamine-1-phosphate. In Streptococcus equi subsp. zooepidemicus (strain MGCS10565), this protein is Phosphoglucosamine mutase.